A 73-amino-acid polypeptide reads, in one-letter code: Neurogranin (73 aa).

The IQ domain maps to 26–55 (ANAAAAKIQASFRGHMTRKKIKGGEIDRKT). Ser-36 carries the phosphoserine; by PKC modification. Residues 47–59 (KGGEIDRKTKDAE) show a composition bias toward basic and acidic residues. The interval 47 to 73 (KGGEIDRKTKDAECANSTRGGDLRNGD) is disordered.

This sequence belongs to the neurogranin family.

Acts as a 'third messenger' substrate of protein kinase C-mediated molecular cascades during synaptic development and remodeling. Binds to calmodulin in the absence of calcium. The sequence is that of Neurogranin (NRGN) from Serinus canaria (Island canary).